A 439-amino-acid polypeptide reads, in one-letter code: Transmembrane protease serine 11F (439 aa).

Topologically, residues methionine 1–leucine 33 are cytoplasmic. A helical; Signal-anchor for type II membrane protein membrane pass occupies residues phenylalanine 34–valine 54. At glutamate 55 to leucine 439 the chain is on the extracellular side. An SEA domain is found at lysine 58 to serine 176. Positions isoleucine 207–glycine 438 constitute a Peptidase S1 domain. The cysteines at positions 234 and 250 are disulfide-linked. Residues histidine 249 and aspartate 294 each act as charge relay system in the active site. Disulfide bonds link cysteine 359–cysteine 375 and cysteine 386–cysteine 414. Serine 390 functions as the Charge relay system in the catalytic mechanism.

It belongs to the peptidase S1 family.

It localises to the membrane. Its function is as follows. Probable serine protease. The polypeptide is Transmembrane protease serine 11F (Tmprss11f) (Mus musculus (Mouse)).